The following is a 132-amino-acid chain: Neurophysin 2 (132 aa).

Intrachain disulfides connect C10/C54, C13/C27, C21/C44, C28/C34, C61/C73, C67/C85, and C74/C79.

The protein belongs to the vasopressin/oxytocin family.

The protein localises to the secreted. Neurophysin 2 specifically binds vasopressin. The protein is Neurophysin 2 of Struthio camelus (Common ostrich).